The chain runs to 819 residues: Leucine--tRNA ligase (819 aa).

Residues 40–51 (PYPSGAGLHVGH) carry the 'HIGH' region motif. The 'KMSKS' region motif lies at 600-604 (KMSKS). K603 is an ATP binding site.

It belongs to the class-I aminoacyl-tRNA synthetase family.

The protein localises to the cytoplasm. It catalyses the reaction tRNA(Leu) + L-leucine + ATP = L-leucyl-tRNA(Leu) + AMP + diphosphate. The polypeptide is Leucine--tRNA ligase (Chlamydia trachomatis serovar D (strain ATCC VR-885 / DSM 19411 / UW-3/Cx)).